We begin with the raw amino-acid sequence, 52 residues long: UPF0057 membrane protein PA0567 (52 aa).

2 consecutive transmembrane segments (helical) span residues 6–26 (ILIA…FGGA) and 29–49 (LNIL…VYII).

Belongs to the UPF0057 (PMP3) family.

It localises to the cell membrane. This Pseudomonas aeruginosa (strain ATCC 15692 / DSM 22644 / CIP 104116 / JCM 14847 / LMG 12228 / 1C / PRS 101 / PAO1) protein is UPF0057 membrane protein PA0567.